A 179-amino-acid polypeptide reads, in one-letter code: Interleukin-22 (179 aa).

Positions 1 to 33 (MAVLQKSMSFSLMGTLAASCLLLIALWAQEANA) are cleaved as a signal peptide. 2 disulfides stabilise this stretch: cysteine 40-cysteine 132 and cysteine 89-cysteine 178. N-linked (GlcNAc...) asparagine glycans are attached at residues asparagine 54, asparagine 68, and asparagine 97.

This sequence belongs to the IL-10 family.

It localises to the secreted. In terms of biological role, cytokine that plays a critical role in modulating tissue responses during inflammation. Plays an essential role in the regeneration of epithelial cells to maintain barrier function after injury and for the prevention of further tissue damage. Unlike most of the cytokines, has no effect on immune cells. Signals through a heterodimeric receptor composed of two subunits, the specific receptor IL22RA1 which is present on non-immune cells in many organs and the shared subunit IL10RB. Ligation of IL22RA1 with IL22 induces activation of the tyrosine kinases JAK1 and TYK2, which in turn activates STAT3. In turn, promotes cell survival and proliferation through STAT3, ERK1/2 and PI3K/AKT pathways. Promotes phosphorylation of GSK3B at 'Ser-9' and CTTN. Promotes epithelial cell spreading. The sequence is that of Interleukin-22 (Il22) from Mus musculus (Mouse).